The chain runs to 226 residues: ATP synthase F(0) complex subunit a (226 aa).

7 helical membrane-spanning segments follow: residues 11 to 31, 37 to 54, 72 to 92, 98 to 118, 138 to 158, 178 to 198, and 199 to 219; these read SPEL…VLLI, LLGN…MTIM, LTSL…PYTF, LSMN…TGMT, IPFM…ALGV, TLNF…LLFL, and LCIL…LLII.

The protein belongs to the ATPase A chain family. In terms of assembly, component of the ATP synthase complex composed at least of ATP5F1A/subunit alpha, ATP5F1B/subunit beta, ATP5MC1/subunit c (homooctomer), MT-ATP6/subunit a, MT-ATP8/subunit 8, ATP5ME/subunit e, ATP5MF/subunit f, ATP5MG/subunit g, ATP5MK/subunit k, ATP5MJ/subunit j, ATP5F1C/subunit gamma, ATP5F1D/subunit delta, ATP5F1E/subunit epsilon, ATP5PF/subunit F6, ATP5PB/subunit b, ATP5PD/subunit d, ATP5PO/subunit OSCP. ATP synthase complex consists of a soluble F(1) head domain (subunits alpha(3) and beta(3)) - the catalytic core - and a membrane F(0) domain - the membrane proton channel (subunits c, a, 8, e, f, g, k and j). These two domains are linked by a central stalk (subunits gamma, delta, and epsilon) rotating inside the F1 region and a stationary peripheral stalk (subunits F6, b, d, and OSCP). Interacts with DNAJC30; interaction is direct.

It localises to the mitochondrion inner membrane. The enzyme catalyses H(+)(in) = H(+)(out). Functionally, subunit a, of the mitochondrial membrane ATP synthase complex (F(1)F(0) ATP synthase or Complex V) that produces ATP from ADP in the presence of a proton gradient across the membrane which is generated by electron transport complexes of the respiratory chain. ATP synthase complex consist of a soluble F(1) head domain - the catalytic core - and a membrane F(1) domain - the membrane proton channel. These two domains are linked by a central stalk rotating inside the F(1) region and a stationary peripheral stalk. During catalysis, ATP synthesis in the catalytic domain of F(1) is coupled via a rotary mechanism of the central stalk subunits to proton translocation. With the subunit c (ATP5MC1), forms the proton-conducting channel in the F(0) domain, that contains two crucial half-channels (inlet and outlet) that facilitate proton movement from the mitochondrial intermembrane space (IMS) into the matrix. Protons are taken up via the inlet half-channel and released through the outlet half-channel, following a Grotthuss mechanism. The chain is ATP synthase F(0) complex subunit a from Lycodon semicarinatus (Ryukyu odd-tooth snake).